A 164-amino-acid polypeptide reads, in one-letter code: Ion-translocating oxidoreductase complex subunit G (164 aa).

Threonine 125 is modified (FMN phosphoryl threonine).

This sequence belongs to the RnfG family. The complex is composed of six subunits: RnfA, RnfB, RnfC, RnfD, RnfE and RnfG. The cofactor is FMN.

Part of a membrane-bound complex that couples electron transfer with translocation of ions across the membrane. The sequence is that of Ion-translocating oxidoreductase complex subunit G from Buchnera aphidicola subsp. Acyrthosiphon pisum (strain APS) (Acyrthosiphon pisum symbiotic bacterium).